The primary structure comprises 159 residues: Neuroglobin (159 aa).

The region spanning 3–151 (KLSEKDKELI…VVAAMSQGWA (149 aa)) is the Globin domain. Residues His-66 and His-98 each contribute to the heme b site.

It belongs to the globin family. In terms of assembly, monomer. Homodimers and homotetramers. Mainly monomeric but also detected as part of homodimers and homotetramers.

The protein resides in the cytoplasm. It is found in the cytosol. The protein localises to the mitochondrion matrix. It carries out the reaction Fe(III)-heme b-[protein] + nitric oxide + H2O = Fe(II)-heme b-[protein] + nitrite + 2 H(+). Its function is as follows. Monomeric globin with a bis-histidyl six-coordinate heme-iron atom through which it can bind dioxygen, carbon monoxide and nitric oxide. Could help transport oxygen and increase its availability to the metabolically active neuronal tissues, though its low quantity in tissues as well as its high affinity for dioxygen, which may limit its oxygen-releasing ability, argue against it. The ferrous/deoxygenated form exhibits a nitrite reductase activity and it could produce nitric oxide which in turn inhibits cellular respiration in response to hypoxia. In its ferrous/deoxygenated state, it may also exhibit GDI (Guanine nucleotide Dissociation Inhibitor) activity toward heterotrimeric G-alpha proteins, thereby regulating signal transduction to facilitate neuroprotective responses in the wake of hypoxia and associated oxidative stress. The chain is Neuroglobin (ngb) from Dissostichus mawsoni (Antarctic cod).